A 419-amino-acid chain; its full sequence is Creatine kinase S-type, mitochondrial (419 aa).

Residues 1–39 constitute a mitochondrion transit peptide; that stretch reads MASAFSKLLTGRNASLLFTTLGTSALTTGYLLNRQKVSA. The cardiolipin-binding stretch occupies residues 40 to 64; it reads DAREQHKLFPPSADYPDLRKHNNCM. One can recognise a Phosphagen kinase N-terminal domain in the interval 46-132; that stretch reads KLFPPSADYP…FDPVIKLRHN (87 aa). The Phosphagen kinase C-terminal domain maps to 159 to 401; sequence YVLSSRVRTG…NYLVDCEKKL (243 aa). Residues 162 to 166 and His225 contribute to the ATP site; that span reads SSRVR. Phosphotyrosine is present on Tyr255. Residues Arg270, Arg326, 354–359, and Asp369 contribute to the ATP site; that span reads RGTGGV. Position 356 is a phosphothreonine (Thr356).

It belongs to the ATP:guanido phosphotransferase family. As to quaternary structure, exists as an octamer composed of four CKMT2 homodimers. Sarcomere-specific. Found only in heart and skeletal muscles.

Its subcellular location is the mitochondrion inner membrane. It catalyses the reaction creatine + ATP = N-phosphocreatine + ADP + H(+). Reversibly catalyzes the transfer of phosphate between ATP and various phosphogens (e.g. creatine phosphate). Creatine kinase isoenzymes play a central role in energy transduction in tissues with large, fluctuating energy demands, such as skeletal muscle, heart, brain and spermatozoa. In Rattus norvegicus (Rat), this protein is Creatine kinase S-type, mitochondrial (Ckmt2).